Here is a 194-residue protein sequence, read N- to C-terminus: MTTGKIYFATTNLKKLNEVKEFLKTDIDHMRISMTEIQGPSEKIVEHKLDQAAPFINPKDAVIVDDTSFSLEALGGFPGVYVKDFLEIGTRKIWEIVEKIGNKSATAVCSLGIAHYENGEIVKKVFSGKLKGSITEPEKDCKTEFGYIFIPDGFNGVLKNMPTDEKNRISHRGIASRSLAAYMASKGIIKTHGP.

10 to 15 (TTNLKK) provides a ligand contact to ITP. Glutamate 36 contacts Mg(2+). Residues lysine 48, 66–67 (DT), lysine 83, lysine 166, and 171–172 (HR) each bind ITP.

This sequence belongs to the HAM1 NTPase family. As to quaternary structure, homodimer. Requires Mg(2+) as cofactor. Mn(2+) serves as cofactor.

The protein localises to the cytoplasm. Its subcellular location is the nucleus. The enzyme catalyses ITP + H2O = IMP + diphosphate + H(+). It catalyses the reaction dITP + H2O = dIMP + diphosphate + H(+). The catalysed reaction is XTP + H2O = XMP + diphosphate + H(+). Pyrophosphatase that hydrolyzes non-canonical purine nucleotides such as inosine triphosphate (ITP), deoxyinosine triphosphate (dITP) or xanthosine 5'-triphosphate (XTP) to their respective monophosphate derivatives. The enzyme does not distinguish between the deoxy- and ribose forms. Probably excludes non-canonical purines from RNA and DNA precursor pools, thus preventing their incorporation into RNA and DNA and avoiding chromosomal lesions. The protein is Inosine triphosphate pyrophosphatase of Encephalitozoon intestinalis (strain ATCC 50506) (Microsporidian parasite).